The following is an 860-amino-acid chain: Semaphorin-3aa (860 aa).

An N-terminal signal peptide occupies residues methionine 1–proline 17. The region spanning arginine 31–leucine 515 is the Sema domain. The N-linked (GlcNAc...) asparagine glycan is linked to asparagine 53. Cysteine 104 and cysteine 115 are oxidised to a cystine. A glycan (N-linked (GlcNAc...) asparagine) is linked at asparagine 126. 4 cysteine pairs are disulfide-bonded: cysteine 133-cysteine 142, cysteine 270-cysteine 382, cysteine 294-cysteine 342, and cysteine 518-cysteine 536. In terms of domain architecture, Ig-like C2-type spans glycine 579–leucine 668. Asparagine 593 is a glycosylation site (N-linked (GlcNAc...) asparagine). The cysteines at positions 652 and 717 are disulfide-linked. Positions lysine 725 to valine 860 are disordered. Composition is skewed to polar residues over residues threonine 748–glutamine 764 and threonine 782–glutamine 818. Residues glutamine 838–valine 860 are compositionally biased toward basic and acidic residues.

The protein belongs to the semaphorin family.

The protein resides in the secreted. May influence outgrowth by a variety of growth cones including those of the posterior lateral line ganglion. The chain is Semaphorin-3aa (sema3aa) from Danio rerio (Zebrafish).